The chain runs to 628 residues: ATP-dependent zinc metalloprotease FtsH 4 (628 aa).

At 1-14 (MAIKPQPQWQRRLA) the chain is on the cytoplasmic side. A helical membrane pass occupies residues 15-35 (SVLLWGSTIYLLVNLLAPALF). Topologically, residues 36–119 (RSQPPQVPYS…AAAPPAKNSW (84 aa)) are lumenal. A helical membrane pass occupies residues 120–140 (FGTLLSWVIPPLIFVGIWSFF). Topologically, residues 141-628 (LNRNNNGAPG…QVQAPGTLVV (488 aa)) are cytoplasmic. Residue 214–221 (GPPGTGKT) coordinates ATP. Zn(2+) is bound at residue H438. E439 is a catalytic residue. Residues H442 and D515 each coordinate Zn(2+).

It in the central section; belongs to the AAA ATPase family. This sequence in the C-terminal section; belongs to the peptidase M41 family. As to quaternary structure, homohexamer. Zn(2+) is required as a cofactor.

It localises to the cellular thylakoid membrane. Its function is as follows. Acts as a processive, ATP-dependent zinc metallopeptidase for both cytoplasmic and membrane proteins. Plays a role in the quality control of integral membrane proteins. In Synechocystis sp. (strain ATCC 27184 / PCC 6803 / Kazusa), this protein is ATP-dependent zinc metalloprotease FtsH 4.